The sequence spans 802 residues: Outer membrane usher protein CssD (802 aa).

It belongs to the fimbrial export usher family.

The protein resides in the cell outer membrane. In terms of biological role, involved in the export and assembly of C6 fimbrial subunits across the outer membrane. This is Outer membrane usher protein CssD (cssD) from Escherichia coli.